The following is a 403-amino-acid chain: F-box protein At1g60400 (403 aa).

The 47-residue stretch at 13–59 (IDRLSALPEHLLCRILSELSTKDSVRTSVLSKHWRNLWLHVPVLELE) folds into the F-box domain.

The sequence is that of F-box protein At1g60400 from Arabidopsis thaliana (Mouse-ear cress).